Consider the following 383-residue polypeptide: DNA dC-&gt;dU-editing enzyme APOBEC-3G (383 aa).

Residues 1–60 form an essential for cytoplasmic localization region; the sequence is MKPQFRNTVERMYRDTFFYNFNNRPILSRRNTVWLCYEVKTRGPSMPTWDAKIFRGQVYS. CMP/dCMP-type deaminase domains lie at 29 to 138 and 214 to 327; these read RRNT…LRVL and GQHE…LRTL. Thr-32 is modified (phosphothreonine; by PKA). Residues His-65, Cys-97, and Cys-100 each contribute to the Zn(2+) site. The tract at residues 209 to 335 is necessary for homooligomerization; it reads KPWVSGQHET…TLHRDGAKIA (127 aa). The segment at 213-215 is interaction with DNA; sequence SGQ. At Thr-218 the chain carries Phosphothreonine; by PKA and CAMK2. Residue His-257 coordinates Zn(2+). Glu-259 functions as the Proton donor in the catalytic mechanism. Zn(2+) contacts are provided by Cys-287 and Cys-290. Residues 312-319 form an interaction with DNA region; sequence RIYDDQGR.

It belongs to the cytidine and deoxycytidylate deaminase family. As to quaternary structure, homodimer. The cofactor is Zn(2+).

The protein localises to the cytoplasm. It localises to the nucleus. Its subcellular location is the P-body. The enzyme catalyses a 2'-deoxycytidine in single-stranded DNA + H2O + H(+) = a 2'-deoxyuridine in single-stranded DNA + NH4(+). Functionally, DNA deaminase (cytidine deaminase) which acts as an inhibitor of retrovirus replication and retrotransposon mobility. After the penetration of retroviral nucleocapsids into target cells of infection and the initiation of reverse transcription, it can induce the conversion of cytosine to uracil in the minus-sense single-strand viral DNA, leading to G-to-A hypermutations in the subsequent plus-strand viral DNA. The resultant detrimental levels of mutations in the proviral genome, along with a deamination-independent mechanism that works prior to the proviral integration, together exert efficient antiretroviral effects in infected target cells. Selectively targets single-stranded DNA and does not deaminate double-stranded DNA or single- or double-stranded RNA. The sequence is that of DNA dC-&gt;dU-editing enzyme APOBEC-3G (APOBEC3G) from Papio anubis (Olive baboon).